Here is a 53-residue protein sequence, read N- to C-terminus: uncharacterized protein (53 aa).

The helical transmembrane segment at 18–38 (FLFFIFYFLFFFIFFTVFGNL) threads the bilayer.

It localises to the membrane. This is an uncharacterized protein from Dictyostelium discoideum (Social amoeba).